We begin with the raw amino-acid sequence, 191 residues long: Aminodeoxychorismate synthase component 2 (191 aa).

Residues 1-191 form the Glutamine amidotransferase type-1 domain; it reads MLLLIDNYDS…HQLLDNFLNR (191 aa). Active-site residues include Cys79, His172, and Glu174.

As to quaternary structure, monomer. Heterodimer consisting of two non-identical subunits: a glutamine amidotransferase subunit (PabA) and a aminodeoxychorismate synthase subunit (PabB).

The enzyme catalyses chorismate + L-glutamine = 4-amino-4-deoxychorismate + L-glutamate. The protein operates within cofactor biosynthesis; tetrahydrofolate biosynthesis; 4-aminobenzoate from chorismate: step 1/2. In terms of biological role, part of a heterodimeric complex that catalyzes the two-step biosynthesis of 4-amino-4-deoxychorismate (ADC), a precursor of p-aminobenzoate (PABA) and tetrahydrofolate. In the first step, a glutamine amidotransferase (PabA) generates ammonia as a substrate that, along with chorismate, is used in the second step, catalyzed by aminodeoxychorismate synthase (PabB) to produce ADC. PabA converts glutamine into glutamate only in the presence of stoichiometric amounts of PabB. The sequence is that of Aminodeoxychorismate synthase component 2 (pabA) from Serratia marcescens.